The following is a 331-amino-acid chain: Ketol-acid reductoisomerase (NADP(+)) (331 aa).

The KARI N-terminal Rossmann domain occupies 2 to 181 (TKVYYEDAVK…GATRAGVIET (180 aa)). Residues 25 to 28 (YGSQ), R48, S52, and 82 to 85 (DETQ) contribute to the NADP(+) site. Residue H107 is part of the active site. An NADP(+)-binding site is contributed by G133. Positions 182–327 (TFKEETETDL…AELREMMPFV (146 aa)) constitute a KARI C-terminal knotted domain. Mg(2+)-binding residues include D190, E194, E226, and E230. S251 serves as a coordination point for substrate.

The protein belongs to the ketol-acid reductoisomerase family. It depends on Mg(2+) as a cofactor.

It catalyses the reaction (2R)-2,3-dihydroxy-3-methylbutanoate + NADP(+) = (2S)-2-acetolactate + NADPH + H(+). It carries out the reaction (2R,3R)-2,3-dihydroxy-3-methylpentanoate + NADP(+) = (S)-2-ethyl-2-hydroxy-3-oxobutanoate + NADPH + H(+). It functions in the pathway amino-acid biosynthesis; L-isoleucine biosynthesis; L-isoleucine from 2-oxobutanoate: step 2/4. Its pathway is amino-acid biosynthesis; L-valine biosynthesis; L-valine from pyruvate: step 2/4. Involved in the biosynthesis of branched-chain amino acids (BCAA). Catalyzes an alkyl-migration followed by a ketol-acid reduction of (S)-2-acetolactate (S2AL) to yield (R)-2,3-dihydroxy-isovalerate. In the isomerase reaction, S2AL is rearranged via a Mg-dependent methyl migration to produce 3-hydroxy-3-methyl-2-ketobutyrate (HMKB). In the reductase reaction, this 2-ketoacid undergoes a metal-dependent reduction by NADPH to yield (R)-2,3-dihydroxy-isovalerate. The polypeptide is Ketol-acid reductoisomerase (NADP(+)) (Listeria monocytogenes serovar 1/2a (strain ATCC BAA-679 / EGD-e)).